The primary structure comprises 119 residues: Ribonuclease P protein component (119 aa).

The protein belongs to the RnpA family. In terms of assembly, consists of a catalytic RNA component (M1 or rnpB) and a protein subunit.

The catalysed reaction is Endonucleolytic cleavage of RNA, removing 5'-extranucleotides from tRNA precursor.. RNaseP catalyzes the removal of the 5'-leader sequence from pre-tRNA to produce the mature 5'-terminus. It can also cleave other RNA substrates such as 4.5S RNA. The protein component plays an auxiliary but essential role in vivo by binding to the 5'-leader sequence and broadening the substrate specificity of the ribozyme. This Corynebacterium diphtheriae (strain ATCC 700971 / NCTC 13129 / Biotype gravis) protein is Ribonuclease P protein component.